Here is an 85-residue protein sequence, read N- to C-terminus: Large ribosomal subunit protein bL27 (85 aa).

Residues 1-25 (MAHKKAGSSSKNGRDSNPQYLGVKR) form a disordered region. Over residues 7–19 (GSSSKNGRDSNPQ) the composition is skewed to polar residues.

Belongs to the bacterial ribosomal protein bL27 family.

This Micrococcus luteus (strain ATCC 4698 / DSM 20030 / JCM 1464 / CCM 169 / CCUG 5858 / IAM 1056 / NBRC 3333 / NCIMB 9278 / NCTC 2665 / VKM Ac-2230) (Micrococcus lysodeikticus) protein is Large ribosomal subunit protein bL27.